Consider the following 612-residue polypeptide: Sulfite reductase [NADPH] hemoprotein beta-component (612 aa).

Residues 1-26 form a disordered region; that stretch reads MDDHKPIETPDGPAVDTPGIGARRYE. Positions 469, 475, 514, and 518 each coordinate [4Fe-4S] cluster. C518 contacts siroheme.

It belongs to the nitrite and sulfite reductase 4Fe-4S domain family. Alpha(8)-beta(8). The alpha component is a flavoprotein, the beta component is a hemoprotein. Siroheme serves as cofactor. The cofactor is [4Fe-4S] cluster.

The catalysed reaction is hydrogen sulfide + 3 NADP(+) + 3 H2O = sulfite + 3 NADPH + 4 H(+). The protein operates within sulfur metabolism; hydrogen sulfide biosynthesis; hydrogen sulfide from sulfite (NADPH route): step 1/1. Functionally, component of the sulfite reductase complex that catalyzes the 6-electron reduction of sulfite to sulfide. This is one of several activities required for the biosynthesis of L-cysteine from sulfate. This is Sulfite reductase [NADPH] hemoprotein beta-component from Methylorubrum extorquens (strain ATCC 14718 / DSM 1338 / JCM 2805 / NCIMB 9133 / AM1) (Methylobacterium extorquens).